We begin with the raw amino-acid sequence, 174 residues long: Gamma-crystallin M3 (174 aa).

Beta/gamma crystallin 'Greek key' domains are found at residues 2–40 (GKII…RVES) and 41–82 (GCFV…RMVP). Positions 83-87 (QYRGP) are connecting peptide. Beta/gamma crystallin 'Greek key' domains lie at 88 to 128 (YRMR…HVMD) and 129 to 171 (GHWL…RRIM).

The protein belongs to the beta/gamma-crystallin family. As to quaternary structure, monomer.

Crystallins are the dominant structural components of the vertebrate eye lens. The protein is Gamma-crystallin M3 of Cyprinus carpio (Common carp).